A 226-amino-acid chain; its full sequence is Lipoprotein-releasing system ATP-binding protein LolD (226 aa).

The ABC transporter domain maps to 6 to 226; the sequence is LKLDNIRRAF…KMSEGLLVEV (221 aa). 42–49 is a binding site for ATP; sequence GPSGAGKS.

Belongs to the ABC transporter superfamily. Lipoprotein translocase (TC 3.A.1.125) family. The complex is composed of two ATP-binding proteins (LolD) and two transmembrane proteins (LolC and LolE).

Its subcellular location is the cell inner membrane. Functionally, part of the ABC transporter complex LolCDE involved in the translocation of mature outer membrane-directed lipoproteins, from the inner membrane to the periplasmic chaperone, LolA. Responsible for the formation of the LolA-lipoprotein complex in an ATP-dependent manner. The sequence is that of Lipoprotein-releasing system ATP-binding protein LolD from Paramagnetospirillum magneticum (strain ATCC 700264 / AMB-1) (Magnetospirillum magneticum).